The primary structure comprises 226 residues: Cytidylate kinase (226 aa).

10–18 (GPASSGKST) contributes to the ATP binding site.

This sequence belongs to the cytidylate kinase family. Type 1 subfamily.

Its subcellular location is the cytoplasm. It catalyses the reaction CMP + ATP = CDP + ADP. It carries out the reaction dCMP + ATP = dCDP + ADP. In Streptococcus thermophilus (strain ATCC BAA-491 / LMD-9), this protein is Cytidylate kinase.